Reading from the N-terminus, the 540-residue chain is Chaperonin GroEL (540 aa).

ATP is bound by residues 29 to 32 (TLGP), 86 to 90 (DGTTT), G413, 476 to 478 (NAA), and D492.

Belongs to the chaperonin (HSP60) family. Forms a cylinder of 14 subunits composed of two heptameric rings stacked back-to-back. Interacts with the co-chaperonin GroES.

It localises to the cytoplasm. The catalysed reaction is ATP + H2O + a folded polypeptide = ADP + phosphate + an unfolded polypeptide.. Its function is as follows. Together with its co-chaperonin GroES, plays an essential role in assisting protein folding. The GroEL-GroES system forms a nano-cage that allows encapsulation of the non-native substrate proteins and provides a physical environment optimized to promote and accelerate protein folding. The polypeptide is Chaperonin GroEL (Streptococcus gordonii).